The primary structure comprises 272 residues: MVTEMSHAESIKRVVDQKLSSHEGFESHMFKIGSYNEAVGESSPFALPYDDSTMALLILSTPDMFDVAFRKWVVQKTMDFGSFDEVCEMVSSPIQSFLEDRLEIMSEKLRKVEENFEILHDYSMTPQRRPKILMQTCGHVAGAAFYYQPCHFQEDGVTWPPAGRMGPNLKFIGLSLHPIYGGHFAFRSVLIFPNVKIPEFCEKEPRPILTASEDVRTALEKFNYNWKDSGFRDFGNPTRRYSTTQMEFFGRPVAERWEVLRPWVDGGAKNID.

Residues Asp121, 132–135 (ILMQ), and 146–148 (YYQ) each bind substrate.

The protein belongs to the MMACHC family. Requires FAD as cofactor. It depends on FMN as a cofactor.

It is found in the cytoplasm. Functionally, catalyzes the reductive dealkylation of cyanocobalamin to cob(II)alamin, using FAD or FMN as cofactor and NADPH as cosubstrate. Can also catalyze the glutathione-dependent reductive demethylation of methylcobalamin, and, with much lower efficiency, the glutathione-dependent reductive demethylation of adenosylcobalamin. Under anaerobic conditions cob(I)alamin is the first product; it is highly reactive and is converted to aquocob(II)alamin in the presence of oxygen. Binds cyanocobalamin, adenosylcobalamin, methylcobalamin and other, related vitamin B12 derivatives. The polypeptide is MMACHC-like protein (cblc-1) (Caenorhabditis elegans).